The sequence spans 506 residues: Histidine ammonia-lyase (506 aa).

Positions 143-145 (ASG) form a cross-link, 5-imidazolinone (Ala-Gly). Ser-144 carries the 2,3-didehydroalanine (Ser) modification.

It belongs to the PAL/histidase family. Post-translationally, contains an active site 4-methylidene-imidazol-5-one (MIO), which is formed autocatalytically by cyclization and dehydration of residues Ala-Ser-Gly.

It localises to the cytoplasm. It catalyses the reaction L-histidine = trans-urocanate + NH4(+). It functions in the pathway amino-acid degradation; L-histidine degradation into L-glutamate; N-formimidoyl-L-glutamate from L-histidine: step 1/3. In Salmonella arizonae (strain ATCC BAA-731 / CDC346-86 / RSK2980), this protein is Histidine ammonia-lyase.